Here is a 293-residue protein sequence, read N- to C-terminus: Elongation factor Ts (293 aa).

Residues Thr80–Val83 are involved in Mg(2+) ion dislocation from EF-Tu.

The protein belongs to the EF-Ts family.

It localises to the cytoplasm. Its function is as follows. Associates with the EF-Tu.GDP complex and induces the exchange of GDP to GTP. It remains bound to the aminoacyl-tRNA.EF-Tu.GTP complex up to the GTP hydrolysis stage on the ribosome. The protein is Elongation factor Ts of Staphylococcus aureus (strain Newman).